Reading from the N-terminus, the 498-residue chain is Diacylglycerol O-acyltransferase 1A (498 aa).

The segment at 1 to 67 (MAISDEPETV…ANSQPQQKQD (67 aa)) is disordered. The next 7 helical transmembrane spans lie at 102 to 122 (HAGL…RLII), 146 to 166 (WPLF…FIVE), 178 to 198 (VVVV…VLVI), 203 to 223 (SAFL…LKLV), 253 to 273 (YPYN…TLCY), 295 to 315 (LIIF…PIVQ), and 342 to 362 (VWLC…AELL). The FYXDWWN motif motif lies at 369–375 (FYQDWWN). 3 helical membrane passes run 410 to 430 (AVAL…CIAV), 432 to 452 (CHIF…LVFI), and 465 to 485 (VGNM…CVLL). Residue His-424 is part of the active site.

It belongs to the membrane-bound acyltransferase family. Sterol o-acyltransferase subfamily. As to expression, highly expressed in flowers and pods. Expressed at low levels in roots, stems and leaves.

Its subcellular location is the endoplasmic reticulum membrane. The enzyme catalyses an acyl-CoA + a 1,2-diacyl-sn-glycerol = a triacyl-sn-glycerol + CoA. It functions in the pathway glycerolipid metabolism; triacylglycerol biosynthesis. Major contributor to triacylglycerol (TAG) synthesis and oil accumulation in developing seeds. Catalyzes the acylation of the sn-3 hydroxy group of sn-1,2-diacylglycerol using acyl-CoA. Has a marked preference for oleoyl-CoA (18:1) and sn-1,2-dioleoylglycerol over vernoloyl-CoA and sn-1,2-divernoloylglycerol. Can use oleoyl-CoA, linoleoyl-CoA and linolenoyl-CoA as substrates. The polypeptide is Diacylglycerol O-acyltransferase 1A (Glycine max (Soybean)).